A 177-amino-acid polypeptide reads, in one-letter code: Large ribosomal subunit protein uL6 (177 aa).

The protein belongs to the universal ribosomal protein uL6 family. Part of the 50S ribosomal subunit.

This protein binds to the 23S rRNA, and is important in its secondary structure. It is located near the subunit interface in the base of the L7/L12 stalk, and near the tRNA binding site of the peptidyltransferase center. The protein is Large ribosomal subunit protein uL6 of Bartonella bacilliformis (strain ATCC 35685 / KC583 / Herrer 020/F12,63).